We begin with the raw amino-acid sequence, 354 residues long: Chorismate synthase (354 aa).

Residue Arg-48 coordinates NADP(+). FMN is bound by residues 125 to 127 (RSS), 239 to 240 (NA), Gly-280, 295 to 299 (KPVAT), and Arg-321.

The protein belongs to the chorismate synthase family. As to quaternary structure, homotetramer. Requires FMNH2 as cofactor.

It catalyses the reaction 5-O-(1-carboxyvinyl)-3-phosphoshikimate = chorismate + phosphate. It functions in the pathway metabolic intermediate biosynthesis; chorismate biosynthesis; chorismate from D-erythrose 4-phosphate and phosphoenolpyruvate: step 7/7. In terms of biological role, catalyzes the anti-1,4-elimination of the C-3 phosphate and the C-6 proR hydrogen from 5-enolpyruvylshikimate-3-phosphate (EPSP) to yield chorismate, which is the branch point compound that serves as the starting substrate for the three terminal pathways of aromatic amino acid biosynthesis. This reaction introduces a second double bond into the aromatic ring system. In Christiangramia forsetii (strain DSM 17595 / CGMCC 1.15422 / KT0803) (Gramella forsetii), this protein is Chorismate synthase.